Reading from the N-terminus, the 369-residue chain is Isocitrate dehydrogenase [NAD] subunit 2, mitochondrial (369 aa).

The N-terminal 15 residues, 1–15 (MLRNTFFRNTSRRFL), are a transit peptide targeting the mitochondrion. Residue threonine 105 is modified to Phosphothreonine. 3 residues coordinate substrate: arginine 119, arginine 129, and arginine 150. Threonine 153 is subject to Phosphothreonine. Aspartate 237 contributes to the substrate binding site. 3 residues coordinate Mg(2+): aspartate 237, aspartate 263, and aspartate 267. 2 positions are modified to phosphothreonine: threonine 327 and threonine 349.

This sequence belongs to the isocitrate and isopropylmalate dehydrogenases family. As to quaternary structure, octamer of two non-identical subunits IDH1 and IDH2. Mg(2+) is required as a cofactor. Requires Mn(2+) as cofactor.

The protein resides in the mitochondrion matrix. The enzyme catalyses D-threo-isocitrate + NAD(+) = 2-oxoglutarate + CO2 + NADH. With respect to regulation, allosterically regulated by several compounds including AMP, NAD(+), and citrate. Functionally, performs an essential role in the oxidative function of the citric acid cycle. Also binds RNA; specifically to the 5'-untranslated leaders of mitochondrial mRNAs. In Saccharomyces cerevisiae (strain ATCC 204508 / S288c) (Baker's yeast), this protein is Isocitrate dehydrogenase [NAD] subunit 2, mitochondrial (IDH2).